The chain runs to 1601 residues: Polycomb group protein Psc (1601 aa).

2 disordered regions span residues 1–91 (MMTP…TTTT) and 165–245 (NGIK…DLAT). Low complexity-rich tracts occupy residues 8 to 91 (AIQP…TTTT) and 182 to 198 (SSSS…SSSS). Residues 199-215 (WPTTRRATSEDASSNGG) are compositionally biased toward polar residues. The span at 228-245 (TAAVAASSTATTTSDLAT) shows a compositional bias: low complexity. The RING-type zinc finger occupies 263 to 302 (CHLCQGYLINATTIVECLHSFCHSCLINHLRKERFCPRCE). 7 disordered regions span residues 561 to 693 (KREK…FSED), 711 to 856 (VESP…NRTP), 895 to 960 (IGGG…SNNY), 1011 to 1097 (YKYT…EKQQ), 1116 to 1315 (SITI…LAPK), 1330 to 1408 (NPAA…HPVM), and 1512 to 1601 (AATG…TKSK). A compositionally biased stretch (low complexity) spans 567 to 590 (SPQMSSKSSSKSSPCTPVSSPSEP). Over residues 611 to 637 (DPERREIVKPLKPEKESRSKKKDKDGS) the composition is skewed to basic and acidic residues. Low complexity predominate over residues 638 to 649 (PKSSSSSSSSSS). Phosphoserine occurs at positions 656 and 658. Over residues 676–689 (SGVSTLSPRVTSGA) the composition is skewed to polar residues. Over residues 729 to 739 (SVQQSASPKSK) the composition is skewed to low complexity. Pro residues predominate over residues 812-822 (LMPPPAKPPML). The span at 929-938 (TTPSQGNKNV) shows a compositional bias: polar residues. Over residues 1011–1022 (YKYTPKPTPNSG) the composition is skewed to low complexity. Residues 1036 to 1045 (LGGGNGGSLG) show a composition bias toward gly residues. A compositionally biased stretch (low complexity) spans 1069–1085 (SSATQSGGNNGIVNNNI). A compositionally biased stretch (polar residues) spans 1116–1133 (SITISRDNGDSSSPNNGQ). Ser-1139 carries the phosphoserine modification. A compositionally biased stretch (pro residues) spans 1204–1217 (PQLPKVATPPPPSS). A phosphothreonine mark is found at Thr-1222, Thr-1236, and Thr-1251. Residues 1247–1258 (VDKKTPSPEKRT) are compositionally biased toward basic and acidic residues. Ser-1253, Ser-1266, and Ser-1274 each carry phosphoserine. Residues 1261–1272 (QMGSHSPTASEN) are compositionally biased toward polar residues. 2 stretches are compositionally biased toward polar residues: residues 1352 to 1375 (QSGQ…SPPA) and 1561 to 1587 (APQT…NNGA).

As to quaternary structure, component of PRC1 complex, which contains many PcG proteins like Pc, ph, Scm, Psc, Sce and also chromatin-remodeling proteins such as histone deacetylases. This complex is distinct from the Esc/E(z) complex, at least composed of esc, E(z), Su(z)12, HDAC1/Rpd3 and Caf1-55. The 2 complexes however cooperate and interact together during the first 3 hours of development to establish PcG silencing.

It is found in the nucleus. Its function is as follows. Polycomb group (PcG) protein. PcG proteins act by forming multiprotein complexes, which are required to maintain the transcriptionally repressive state of homeotic genes throughout development. PcG proteins are not required to initiate repression, but to maintain it during later stages of development. Component of the PcG multiprotein PRC1 complex, a complex that acts via chromatin remodeling and modification of histones; it mediates monoubiquitination of histone H2A 'Lys-118', rendering chromatin heritably changed in its expressibility. Needed to maintain expression patterns of the homeotic selector genes of the Antennapedia (Antp-C) and Bithorax (BX-C) complexes, and hence for the maintenance of segmental determination. This is Polycomb group protein Psc (Psc) from Drosophila melanogaster (Fruit fly).